The following is a 406-amino-acid chain: Formate-dependent phosphoribosylglycinamide formyltransferase (406 aa).

N(1)-(5-phospho-beta-D-ribosyl)glycinamide contacts are provided by residues 27 to 28 (EL) and Glu87. ATP is bound by residues Arg120, Lys162, 167 to 172 (SSGKGQ), 202 to 205 (EGFI), and Glu210. The region spanning 125 to 320 (RLAAETLGLP…EFELHARALL (196 aa)) is the ATP-grasp domain. Positions 279 and 291 each coordinate Mg(2+). N(1)-(5-phospho-beta-D-ribosyl)glycinamide is bound by residues Asp298, Lys367, and 374 to 375 (RR).

This sequence belongs to the PurK/PurT family. As to quaternary structure, homodimer.

The catalysed reaction is N(1)-(5-phospho-beta-D-ribosyl)glycinamide + formate + ATP = N(2)-formyl-N(1)-(5-phospho-beta-D-ribosyl)glycinamide + ADP + phosphate + H(+). It functions in the pathway purine metabolism; IMP biosynthesis via de novo pathway; N(2)-formyl-N(1)-(5-phospho-D-ribosyl)glycinamide from N(1)-(5-phospho-D-ribosyl)glycinamide (formate route): step 1/1. In terms of biological role, involved in the de novo purine biosynthesis. Catalyzes the transfer of formate to 5-phospho-ribosyl-glycinamide (GAR), producing 5-phospho-ribosyl-N-formylglycinamide (FGAR). Formate is provided by PurU via hydrolysis of 10-formyl-tetrahydrofolate. The chain is Formate-dependent phosphoribosylglycinamide formyltransferase from Bordetella bronchiseptica (strain ATCC BAA-588 / NCTC 13252 / RB50) (Alcaligenes bronchisepticus).